A 455-amino-acid polypeptide reads, in one-letter code: Chromosomal replication initiator protein DnaA (455 aa).

Positions 1–70 (MTNETWVQVR…RMRLTEAGSP (70 aa)) are domain I, interacts with DnaA modulators. The interval 70 to 113 (PVERLEFAVSNTPRAPLKEVKAAAPAASPARARPAPPEEDLRGA) is domain II. Positions 87 to 109 (KEVKAAAPAASPARARPAPPEED) are disordered. Positions 91 to 102 (AAAPAASPARAR) are enriched in low complexity. The domain III, AAA+ region stretch occupies residues 114–335 (PLDARFTFDS…GALTRLFAFA (222 aa)). Positions 158, 160, 161, and 162 each coordinate ATP. Positions 336-455 (SLVGREITLD…LQLLRRLLQA (120 aa)) are domain IV, binds dsDNA.

The protein belongs to the DnaA family. In terms of assembly, oligomerizes as a right-handed, spiral filament on DNA at oriC.

The protein localises to the cytoplasm. Its function is as follows. Plays an essential role in the initiation and regulation of chromosomal replication. ATP-DnaA binds to the origin of replication (oriC) to initiate formation of the DNA replication initiation complex once per cell cycle. Binds the DnaA box (a 9 base pair repeat at the origin) and separates the double-stranded (ds)DNA. Forms a right-handed helical filament on oriC DNA; dsDNA binds to the exterior of the filament while single-stranded (ss)DNA is stabiized in the filament's interior. The ATP-DnaA-oriC complex binds and stabilizes one strand of the AT-rich DNA unwinding element (DUE), permitting loading of DNA polymerase. After initiation quickly degrades to an ADP-DnaA complex that is not apt for DNA replication. Binds acidic phospholipids. The polypeptide is Chromosomal replication initiator protein DnaA (Cereibacter sphaeroides (strain ATCC 17029 / ATH 2.4.9) (Rhodobacter sphaeroides)).